Consider the following 357-residue polypeptide: Histidinol-phosphate aminotransferase 1 (357 aa).

At K210 the chain carries N6-(pyridoxal phosphate)lysine.

It belongs to the class-II pyridoxal-phosphate-dependent aminotransferase family. Histidinol-phosphate aminotransferase subfamily. In terms of assembly, homodimer. Requires pyridoxal 5'-phosphate as cofactor.

It catalyses the reaction L-histidinol phosphate + 2-oxoglutarate = 3-(imidazol-4-yl)-2-oxopropyl phosphate + L-glutamate. It functions in the pathway amino-acid biosynthesis; L-histidine biosynthesis; L-histidine from 5-phospho-alpha-D-ribose 1-diphosphate: step 7/9. The chain is Histidinol-phosphate aminotransferase 1 from Methylococcus capsulatus (strain ATCC 33009 / NCIMB 11132 / Bath).